A 240-amino-acid polypeptide reads, in one-letter code: Lactate utilization protein C (240 aa).

The protein belongs to the LutC/YkgG family.

In terms of biological role, is involved in L-lactate degradation and allows cells to grow with lactate as the sole carbon source. This chain is Lactate utilization protein C, found in Geobacillus thermodenitrificans (strain NG80-2).